The primary structure comprises 339 residues: Catalase-related peroxidase (339 aa).

Positions 1 to 31 are cleaved as a signal peptide; sequence MIRIRNRWFRWLAIALASLVASIGIATVGFA. The active site involves His-58. Position 328 (Tyr-328) interacts with heme.

Belongs to the catalase family. Requires heme as cofactor.

It is found in the periplasm. Has an organic peroxide-dependent peroxidase activity. The chain is Catalase-related peroxidase (srpA) from Synechococcus elongatus (strain ATCC 33912 / PCC 7942 / FACHB-805) (Anacystis nidulans R2).